Here is a 257-residue protein sequence, read N- to C-terminus: MDRIIEKLDHGWWVVSHEQKLWLPKGELPYGEAANFDLVGQRALQIGEWQGEPVWLVQLQRRHDMGSVRQVIDLDVGLFQLAGRGVQLAEFYRSHKYCGYCGHEMYPSKTEWAMLCSHCRERYYPQIAPCIIVAIRRDDSILLAQHTRHRNGVHTVLAGFVEVGETLEQAVAREVMEESGIKVKNLRYVTSQPWPFPQSLMTAFMAEYDSGEIVIDPKELLEAHWYRYDDLPLLPPPGTVARRLIEDTVAMCRAEYE.

Substrate contacts are provided by K25 and R69. Zn(2+) is bound by residues C98 and C101. Residue E111 coordinates substrate. Zn(2+) contacts are provided by C116 and C119. Y124 is a substrate binding site. A Nudix hydrolase domain is found at 125–248; it reads PQIAPCIIVA…TVARRLIEDT (124 aa). A158, E174, and E178 together coordinate a divalent metal cation. A Nudix box motif is present at residues 159 to 180; it reads GFVEVGETLEQAVAREVMEESG. Position 192-199 (192-199) interacts with substrate; it reads QPWPFPQS. E219 contacts a divalent metal cation. A241 lines the substrate pocket.

Belongs to the Nudix hydrolase family. NudC subfamily. Homodimer. Requires Mg(2+) as cofactor. Mn(2+) serves as cofactor. The cofactor is Zn(2+).

It carries out the reaction a 5'-end NAD(+)-phospho-ribonucleoside in mRNA + H2O = a 5'-end phospho-adenosine-phospho-ribonucleoside in mRNA + beta-nicotinamide D-ribonucleotide + 2 H(+). The enzyme catalyses NAD(+) + H2O = beta-nicotinamide D-ribonucleotide + AMP + 2 H(+). The catalysed reaction is NADH + H2O = reduced beta-nicotinamide D-ribonucleotide + AMP + 2 H(+). Its function is as follows. mRNA decapping enzyme that specifically removes the nicotinamide adenine dinucleotide (NAD) cap from a subset of mRNAs by hydrolyzing the diphosphate linkage to produce nicotinamide mononucleotide (NMN) and 5' monophosphate mRNA. The NAD-cap is present at the 5'-end of some mRNAs and stabilizes RNA against 5'-processing. Has preference for mRNAs with a 5'-end purine. Catalyzes the hydrolysis of a broad range of dinucleotide pyrophosphates. In Escherichia coli O45:K1 (strain S88 / ExPEC), this protein is NAD-capped RNA hydrolase NudC.